We begin with the raw amino-acid sequence, 823 residues long: Protein FAM83G (823 aa).

Position 2 is an N-acetylalanine (Ala-2). The DUF1669 stretch occupies residues Ala-2–Leu-312. A Phosphoserine modification is found at Ser-4. Positions Asp-75 to Pro-108 are disordered. Phosphoserine is present on residues Ser-124, Ser-127, and Ser-356. Residues Arg-450 to Pro-823 form a disordered region. The span at Thr-452–Ser-465 shows a compositional bias: polar residues. Over residues Asp-497–Arg-508 the composition is skewed to pro residues. Basic and acidic residues predominate over residues Leu-529–Leu-543. The segment covering Gly-578–Tyr-587 has biased composition (acidic residues). Phosphoserine occurs at positions 610, 614, 616, 650, and 666. 2 stretches are compositionally biased toward basic and acidic residues: residues Arg-672 to Lys-681 and Asp-809 to Pro-823.

The protein belongs to the FAM83 family. In terms of assembly, interacts with SMAD1 (via MH2 domain); in a SMAD4-independent manner. Directly interacts (via DUF1669) with casein kinase isoforms CSNK1A1 and CSNK1A1L. Phosphorylated in vitro by CSNK1A1. Post-translationally, BMP signaling induces the phosphorylation by BMPR1A at Ser-610, Ser-614 and Ser-616. Phosphorylation at Ser-610 is necessary for the activation of SMAD4-independent BMP target genes such as NEDD9 and ASNS.

It is found in the cytoplasm. It localises to the cytosol. Its subcellular location is the nucleus. Its function is as follows. Substrate for type I BMP receptor kinase involved in regulation of some target genes of the BMP signaling pathway. Also regulates the expression of several non-BMP target genes, suggesting a role in other signaling pathways. The chain is Protein FAM83G (FAM83G) from Homo sapiens (Human).